A 393-amino-acid chain; its full sequence is Stimulated by retinoic acid gene 8 protein (393 aa).

The segment covering 1–11 (MATPGEGNQPS) has biased composition (polar residues). Residues 1–25 (MATPGEGNQPSDDGAPQPLAQLQKL) form a disordered region. Residues 28–33 (RVVRRR) carry the Nuclear localization signal (NLS) motif. The stretch at 66-95 (QVLNRTKIHIQEQEESLDKLLKLKASFNLQ) forms a coiled coil. Residues 124–201 (FLQDSPPEWF…EEKKVDLSHS (78 aa)) are disordered. Residues 141 to 192 (DAEEEGEEEGEEEGEEGEEEEEGDEEGEEEEENGEEREVEEYQEEEEEEEEE) show a composition bias toward acidic residues. The Nuclear export signal (NES) signature appears at 209-218 (LMEFERYLNF).

As to quaternary structure, interacts with XPO1. Interacts with MEIOSIN. In terms of processing, phosphorylated in P19 EC cells. As to expression, expressed exclusively in premeiotic germ cells in both sexes. In females, is expressed in the embryonic ovary. In males, is expressed in pubertal and adult testes, in premeiotic spermatogenic cells. Expressed by some type A and B spermatogonia, preleptotene spermatocytes, and early leptotene spermatocytes (at protein level). Expression begins in late undifferentiated spermatogonia and persists during differentiating spermatogonia (at protein level).

The protein localises to the cytoplasm. It localises to the nucleus. Functionally, meiosis-inducer required for the transition into meiosis for both female and male germ cells. In female germ cells, acts downstream of ZGLP1 as a key effector of the meiotic program: required for premeiotic DNA replication and subsequent events in meiotic prophase. During spermatogenesis, next to its role in meiotic initiation, promotes (but is not required for) spermatogonial differentiation. In complex with MEIOSIN, directly activates the transcription of a subset of critical meiotic genes playing a central role in cell-cycle switching from mitosis to meiosis. In Mus musculus (Mouse), this protein is Stimulated by retinoic acid gene 8 protein.